The primary structure comprises 93 residues: uncharacterized protein (93 aa).

This is an uncharacterized protein from Gallid herpesvirus 2 (strain Chicken/Md5/ATCC VR-987) (GaHV-2).